The following is a 651-amino-acid chain: Beta-glucuronidase (651 aa).

The N-terminal stretch at 1 to 22 (MARGSAVAWAAFGPLLWGCALG) is a signal peptide. N-linked (GlcNAc...) asparagine glycosylation is found at Asn-173, Asn-190, Asn-272, and Asn-420. Residue Glu-451 is the Proton donor of the active site. N-linked (GlcNAc...) asparagine glycosylation is present at Asn-631.

It belongs to the glycosyl hydrolase 2 family. In terms of assembly, homotetramer.

It is found in the lysosome. It carries out the reaction a beta-D-glucuronoside + H2O = D-glucuronate + an alcohol. Inhibited by L-aspartic acid. Its function is as follows. Plays an important role in the degradation of dermatan and keratan sulfates. The polypeptide is Beta-glucuronidase (GUSB) (Pongo abelii (Sumatran orangutan)).